We begin with the raw amino-acid sequence, 473 residues long: Glutamyl-tRNA reductase (473 aa).

Substrate-binding positions include 49 to 52 (TCNR), serine 109, 114 to 116 (EQQ), and glutamine 120. Catalysis depends on cysteine 50, which acts as the Nucleophile. Residue 189 to 194 (GAGSMG) participates in NADP(+) binding. The interval 445-473 (SGLDAGSGPQGADGPSAGPTPSAPNPSAE) is disordered.

Belongs to the glutamyl-tRNA reductase family. As to quaternary structure, homodimer.

It carries out the reaction (S)-4-amino-5-oxopentanoate + tRNA(Glu) + NADP(+) = L-glutamyl-tRNA(Glu) + NADPH + H(+). It functions in the pathway porphyrin-containing compound metabolism; protoporphyrin-IX biosynthesis; 5-aminolevulinate from L-glutamyl-tRNA(Glu): step 1/2. In terms of biological role, catalyzes the NADPH-dependent reduction of glutamyl-tRNA(Glu) to glutamate 1-semialdehyde (GSA). This Mycobacterium ulcerans (strain Agy99) protein is Glutamyl-tRNA reductase.